The following is a 710-amino-acid chain: Forkhead box protein P2 (710 aa).

A compositionally biased stretch (polar residues) spans 1–28; that stretch reads MMQESATETISNSSMNQNGMSTLSSQLD. Disordered regions lie at residues 1-44 and 272-334; these read MMQE…SSEV and HSQE…TGAS. Basic and acidic residues predominate over residues 273–283; the sequence is SQEDNGIKHGG. A compositionally biased stretch (low complexity) spans 287–300; the sequence is TTNNSSSTTSSTTS. The segment covering 310-319 has biased composition (polar residues); the sequence is SIVNGQSSVL. Basic and acidic residues predominate over residues 321 to 332; sequence ARRDSSSHEETG. The C2H2-type zinc finger occupies 343-366; the sequence is CKWPGCESICEDFGQFLKHLNNEH. Residues 383-404 are leucine-zipper; that stretch reads VQQLEIQLSKERERLQAMMTHL. The segment at 417–421 is CTBP1-binding; that stretch reads PLNLV. Positions 433–454 are enriched in low complexity; it reads TSPQSLPQTPTTPTAPVTPITQ. The segment at 433 to 460 is disordered; it reads TSPQSLPQTPTTPTAPVTPITQGPSVIT. Positions 499-589 form a DNA-binding region, fork-head; sequence RPPFTYATLI…SQKITGSPTL (91 aa). 2 disordered regions span residues 644 to 663 and 673 to 710; these read LDHI…QPHI and VIAE…EDLE. A compositionally biased stretch (acidic residues) spans 694–710; it reads LEDDREIEEEPLSEDLE.

As to quaternary structure, forms homodimers and heterodimers with FOXP1 and FOXP4. Dimerization is required for DNA-binding. Interacts with CTBP1. Interacts with FOXP1. Interacts with TBR1. Interacts with ZMYM2.

The protein localises to the nucleus. In terms of biological role, transcriptional repressor that may play a role in the specification and differentiation of lung epithelium. May also play a role in developing neural, gastrointestinal and cardiovascular tissues. Can act with CTBP1 to synergistically repress transcription but CTPBP1 is not essential. Plays a role in synapse formation by regulating SRPX2 levels. The sequence is that of Forkhead box protein P2 (Foxp2) from Rattus norvegicus (Rat).